Here is a 296-residue protein sequence, read N- to C-terminus: Diaminopimelate epimerase (296 aa).

Substrate is bound by residues Asn17, Gln49, and Asn69. Cys78 (proton donor) is an active-site residue. Residues 79 to 80 (GN), Asn171, Asn205, and 223 to 224 (ER) contribute to the substrate site. The active-site Proton acceptor is the Cys232. 233 to 234 (GT) lines the substrate pocket.

The protein belongs to the diaminopimelate epimerase family. In terms of assembly, homodimer.

Its subcellular location is the cytoplasm. The catalysed reaction is (2S,6S)-2,6-diaminopimelate = meso-2,6-diaminopimelate. The protein operates within amino-acid biosynthesis; L-lysine biosynthesis via DAP pathway; DL-2,6-diaminopimelate from LL-2,6-diaminopimelate: step 1/1. Its function is as follows. Catalyzes the stereoinversion of LL-2,6-diaminopimelate (L,L-DAP) to meso-diaminopimelate (meso-DAP), a precursor of L-lysine and an essential component of the bacterial peptidoglycan. This is Diaminopimelate epimerase from Methylorubrum populi (strain ATCC BAA-705 / NCIMB 13946 / BJ001) (Methylobacterium populi).